A 694-amino-acid polypeptide reads, in one-letter code: Heat shock protein homolog SSE1 (694 aa).

Residues Ala671–Asp694 form a disordered region. Over residues Ala675 to Thr684 the composition is skewed to basic and acidic residues.

It belongs to the heat shock protein 70 family.

It is found in the cytoplasm. The protein is Heat shock protein homolog SSE1 (SSE1) of Candida glabrata (strain ATCC 2001 / BCRC 20586 / JCM 3761 / NBRC 0622 / NRRL Y-65 / CBS 138) (Yeast).